The primary structure comprises 1025 residues: Multidrug resistance protein MdtC (1025 aa).

12 helical membrane-spanning segments follow: residues 3–23 (FFAL…AITL), 333–353 (EVEQ…FLFL), 360–380 (IIPA…MYLC), 387–407 (LSLM…IVVL), 431–451 (VGFT…PLLL), 469–489 (VAIG…CGWM), 528–548 (LVGV…ISIP), 853–873 (VILI…LYES), 875–895 (VHPL…LLAL), 897–917 (LFNA…IGIV), 953–973 (PIMM…LSGG), and 984–1004 (ITIV…TPVV).

Belongs to the resistance-nodulation-cell division (RND) (TC 2.A.6) family. MdtC subfamily. In terms of assembly, part of a tripartite efflux system composed of MdtA, MdtB and MdtC. MdtC forms a heteromultimer with MdtB.

Its subcellular location is the cell inner membrane. The MdtABC tripartite complex confers resistance against novobiocin and deoxycholate. The chain is Multidrug resistance protein MdtC from Escherichia coli O9:H4 (strain HS).